The following is an 887-amino-acid chain: MPSLPQEGVIQGPSPLDLNTELPYQSTMKRKVRKKKKKGTITANVAGTKFEIVRLVIDEMGFMKTPDEDETSNLIWCDSAVQQEKISELQNYQRINHFPGMGEICRKDFLARNMTKMIKSRPLDYTFVPRTWIFPAEYTQFQNYVKELKKKRKQKTFIVKPANGAMGHGISLIRNGDKLPSQDHLIVQEYIEKPFLMEGYKFDLRIYILVTSCDPLKIFLYHDGLVRMGTEKYIPPNESNLTQLYMHLTNYSVNKHNEHFERDETENKGSKRSIKWFTEFLQANQHDVAKFWSDISELVVKTLIVAEPHVLHAYRMCRPGQPPGSESVCFEVLGFDILLDRKLKPWLLEINRAPSFGTDQKIDYDVKRGVLLNALKLLNIRTSDKRRNLAKQKAEAQRRLYGQNSIKRLLPGSSDWEQQRHQLERRKEELKERLAQVRKQISREEHENRHMGNYRRIYPPEDKALLEKYENLLAVAFQTFLSGRAASFQRELNNPLKRMKEEDILDLLEQCEIDDEKLMGKTTKTRGPKPLCSMPESTEIMKRPKYCSSDSSYDSSSSSSESDENEKEEYQNKKREKQVTYNLKPSNHYKLIQQPSSIRRSVSCPRSISAQSPSSGDTRPFSAQQMISVSRPTSASRSHSLNRASSYMRHLPHSNDACSTNSQVSESLRQLKTKEQEDDLTSQTLFVLKDMKIRFPGKSDAESELLIEDIIDNWKYHKTKVASYWLIKLDSVKQRKVLDIVKTSIRTVLPRIWKVPDVEEVNLYRIFNRVFNRLLWSRGQGLWNCFCDSGSSWESIFNKSPEVVTPLQLQCCQRLVELCKQCLLVVYKYATDKRGSLSGIGPDWGNSRYLLPGSTQFFLRTPTYNLKYNSPGMTRSNVLFTSRYGHL.

Residues 1–21 (MPSLPQEGVIQGPSPLDLNTE) are disordered. The TTL domain occupies 38–390 (KGTITANVAG…RTSDKRRNLA (353 aa)). ATP is bound by residues lysine 160, 166–167 (MG), 188–191 (QEYI), and 201–203 (KFD). Arginine 227 is a binding site for L-glutamate. 249 to 250 (TN) is a binding site for ATP. L-glutamate-binding residues include tyrosine 251, serine 252, and lysine 271. Residues aspartate 336, glutamate 349, and asparagine 351 each contribute to the Mg(2+) site. Lysine 367 is an L-glutamate binding site. Residues 388–450 (NLAKQKAEAQ…ISREEHENRH (63 aa)) are c-MTBD region. 2 disordered regions span residues 519-621 (MGKT…TRPF) and 651-676 (LPHSNDACSTNSQVSESLRQLKTKEQ). The span at 548-560 (SSDSSYDSSSSSS) shows a compositional bias: low complexity. Polar residues-rich tracts occupy residues 593–621 (QQPSSIRRSVSCPRSISAQSPSSGDTRPF) and 656–670 (DACSTNSQVSESLRQ).

This sequence belongs to the tubulin--tyrosine ligase family. In terms of assembly, interacts with both alpha- and beta-tubulin (via C-terminal tubulin tails). Mg(2+) is required as a cofactor. As to expression, highly expressed in the nervous system including spinal cord, thalamus, hippocampus, hypothalamus and cerebellum.

The protein localises to the cell projection. Its subcellular location is the cilium. The protein resides in the cytoplasm. It is found in the cytoskeleton. It localises to the cilium basal body. The protein localises to the dendrite. Its subcellular location is the perikaryon. It catalyses the reaction L-glutamyl-[protein] + L-glutamate + ATP = gamma-L-glutamyl-L-glutamyl-[protein] + ADP + phosphate + H(+). It carries out the reaction (L-glutamyl)(n)-gamma-L-glutamyl-L-glutamyl-[protein] + L-glutamate + ATP = (L-glutamyl)(n+1)-gamma-L-glutamyl-L-glutamyl-[protein] + ADP + phosphate + H(+). Its function is as follows. Polyglutamylase which modifies tubulin, generating polyglutamate side chains of variable lengths on the gamma-carboxyl group of specific glutamate residues within the C-terminal tail of tubulin. Mediates both ATP-dependent initiation and elongation steps of the polyglutamylation reaction. Preferentially modifies the beta-tubulin tail over an alpha-tail. Competes with monoglycylase TTLL3 for modification site on beta-tubulin substrate, thereby creating an anticorrelation between glycylation and glutamylation reactions. Required for neurite growth; responsible for the strong increase in tubulin polyglutamylation during postnatal neuronal maturation. The sequence is that of Tubulin polyglutamylase TTLL7 from Homo sapiens (Human).